A 1341-amino-acid chain; its full sequence is Aldehyde oxidase 4 (1341 aa).

The 2Fe-2S ferredoxin-type domain occupies 8-95 (DELIFFVNGK…GAAVTTVEGV (88 aa)). Residues Cys47, Cys52, Cys55, and Cys77 each coordinate [2Fe-2S] cluster. Gln116 provides a ligand contact to Mo-molybdopterin. The [2Fe-2S] cluster site is built by Cys117, Cys120, Cys152, and Cys154. Cys154 provides a ligand contact to Mo-molybdopterin. The 186-residue stretch at 239–424 (FQGERTTWLA…LSVFIPYSSQ (186 aa)) folds into the FAD-binding PCMH-type domain. FAD contacts are provided by residues 267 to 274 (LIMGNTTV), Ala348, Thr357, His361, Asp370, and Val414. Mo-molybdopterin is bound by residues Ala805, 805–806 (AF), Leu1046, 1087–1090 (GSMG), Gln1202, and Leu1266. The Proton acceptor; for azaheterocycle hydroxylase activity role is filled by Glu1268.

This sequence belongs to the xanthine dehydrogenase family. In terms of assembly, homodimer. It depends on [2Fe-2S] cluster as a cofactor. The cofactor is FAD. Mo-molybdopterin is required as a cofactor. As to expression, detected in liver, testis, kidney, brain, Harderian gland and olfactory mucosa.

It localises to the cytoplasm. The enzyme catalyses an aldehyde + O2 + H2O = a carboxylate + H2O2 + H(+). The catalysed reaction is retinal + O2 + H2O = retinoate + H2O2 + H(+). Its function is as follows. Aldehyde oxidase able to catalyze the oxidation of retinaldehyde into retinoate. Acts as a negative modulator of the epidermal trophism. May be able to oxidize a wide variety of aldehydes into their corresponding carboxylates and to hydroxylate azaheterocycles. The chain is Aldehyde oxidase 4 (AOX4) from Cavia porcellus (Guinea pig).